Reading from the N-terminus, the 984-residue chain is Putative formate dehydrogenase SAB2186c (984 aa).

A 2Fe-2S ferredoxin-type domain is found at 3-79 (EHLVVTLDGK…PMTVNTVNND (77 aa)). [2Fe-2S] cluster contacts are provided by C37, C48, C51, and C63. Residues 79-119 (DVKDAQKEALDRILEKHMLYCTVCDYNNGDCEIHNTMDAWG) form the 4Fe-4S His(Cys)3-ligated-type domain. Residues H95, C99, C102, C109, C147, C150, C153, C157, C190, C193, C196, C200, C264, C267, C271, and C299 each contribute to the [4Fe-4S] cluster site. 2 4Fe-4S ferredoxin-type domains span residues 138-165 (PFYR…VNET) and 181-211 (NDVP…VNME). The segment at 252–984 (MRKERIKKTK…YVFPGNQVDK (733 aa)) is formate dehydrogenase. The 4Fe-4S Mo/W bis-MGD-type domain maps to 257–313 (IKKTKTVCTYCGVGCSFEVWTKDREILKVQPSHDSPANKIATCVKGKFSWGHINSDQ).

It in the C-terminal section; belongs to the prokaryotic molybdopterin-containing oxidoreductase family. [2Fe-2S] cluster serves as cofactor. It depends on [4Fe-4S] cluster as a cofactor. The cofactor is Mo-bis(molybdopterin guanine dinucleotide).

It carries out the reaction formate + NAD(+) = CO2 + NADH. This is Putative formate dehydrogenase SAB2186c from Staphylococcus aureus (strain bovine RF122 / ET3-1).